The chain runs to 252 residues: 3-deoxy-manno-octulosonate cytidylyltransferase (252 aa).

Belongs to the KdsB family.

Its subcellular location is the cytoplasm. The enzyme catalyses 3-deoxy-alpha-D-manno-oct-2-ulosonate + CTP = CMP-3-deoxy-beta-D-manno-octulosonate + diphosphate. It participates in nucleotide-sugar biosynthesis; CMP-3-deoxy-D-manno-octulosonate biosynthesis; CMP-3-deoxy-D-manno-octulosonate from 3-deoxy-D-manno-octulosonate and CTP: step 1/1. Its pathway is bacterial outer membrane biogenesis; lipopolysaccharide biosynthesis. In terms of biological role, activates KDO (a required 8-carbon sugar) for incorporation into bacterial lipopolysaccharide in Gram-negative bacteria. This Nitratidesulfovibrio vulgaris (strain DP4) (Desulfovibrio vulgaris) protein is 3-deoxy-manno-octulosonate cytidylyltransferase.